The primary structure comprises 538 residues: MVNKVVDEVQRLVSAIILTSFMTGLFILSLWKNYVTVHFQHKNDPRDTRSSRTKIQPNDKKKKRPARHSRPLSISSTTPLDLQRDQENNIEYDRTVTSKLSMTSNASLSENGDGNANIKMETNVNQAPYAAENPFQNIALAEDTKLVPDLKYYYKEYGIDIEEFEVETDDGFIIDLWHFKSRLNDGVEEVKREPILLLHGLLQSCGAFASSGRKSLAYFLYESGFDVWLGNNRCGLNAKWNMKKLGNDHSKKWDWDMHQMVQYDLKALINYVLDSTGYAKLSLVAHSQGTTQGFMGLVNGEKLYASDFKLVDKLENFVALAPAVYPGPLLDEKAFVRLMAKGIDSPWYFGRRSFIPLMMTMRKLMVGTKIFSFLSYIMFNYLFDWNDVLWDRVLRDRNFLFSPVHISVKLMQWWLSPLPNKLSFKKGAEKIFPDKKTWFPIAKNDDDSGNNLDNNKLHLNPKRQNSEEFPHIIMFIPKQDRLVDGERLINHFINHEANAVYKIWYIDEYSHLDVLWAHDVIDRIGKPMIENLRFPNAR.

Topologically, residues 1–11 (MVNKVVDEVQR) are cytoplasmic. Residues 12-32 (LVSAIILTSFMTGLFILSLWK) form a helical; Signal-anchor for type II membrane protein membrane-spanning segment. Residues 33 to 538 (NYVTVHFQHK…IENLRFPNAR (506 aa)) lie on the Lumenal side of the membrane. A disordered region spans residues 42–87 (KNDPRDTRSSRTKIQPNDKKKKRPARHSRPLSISSTTPLDLQRDQE). The span at 60 to 70 (KKKKRPARHSR) shows a compositional bias: basic residues. 2 positions are modified to phosphoserine: Ser73 and Ser107. The active-site Nucleophile is the Ser287. Active-site charge relay system residues include Asp480 and His511.

This sequence belongs to the AB hydrolase superfamily. Post-translationally, not glycosylated.

The protein resides in the cell membrane. It carries out the reaction a sterol ester + H2O = a sterol + a fatty acid + H(+). Mediates the hydrolysis of steryl esters. Required for mobilization of steryl ester, thereby playing a central role in lipid metabolism. The chain is Sterol esterase 2 (YEH2) from Saccharomyces cerevisiae (strain ATCC 204508 / S288c) (Baker's yeast).